Reading from the N-terminus, the 302-residue chain is Putative S-adenosyl-L-methionine-dependent methyltransferase MRA_0290 (302 aa).

Residues Asp-126 and 155–156 (DL) contribute to the S-adenosyl-L-methionine site.

Belongs to the UPF0677 family.

Functionally, exhibits S-adenosyl-L-methionine-dependent methyltransferase activity. The polypeptide is Putative S-adenosyl-L-methionine-dependent methyltransferase MRA_0290 (Mycobacterium tuberculosis (strain ATCC 25177 / H37Ra)).